A 1270-amino-acid chain; its full sequence is DNA-directed RNA polymerase subunit beta (1270 aa).

Belongs to the RNA polymerase beta chain family. As to quaternary structure, the RNAP catalytic core consists of 2 alpha, 1 beta, 1 beta' and 1 omega subunit. When a sigma factor is associated with the core the holoenzyme is formed, which can initiate transcription.

The catalysed reaction is RNA(n) + a ribonucleoside 5'-triphosphate = RNA(n+1) + diphosphate. Functionally, DNA-dependent RNA polymerase catalyzes the transcription of DNA into RNA using the four ribonucleoside triphosphates as substrates. The protein is DNA-directed RNA polymerase subunit beta of Bacteroides fragilis (strain ATCC 25285 / DSM 2151 / CCUG 4856 / JCM 11019 / LMG 10263 / NCTC 9343 / Onslow / VPI 2553 / EN-2).